Here is a 335-residue protein sequence, read N- to C-terminus: MKLATPRWWYLREGAPSPITRALLTPLSWIWAAQTARRIARTTPRGADCAVICVGNFTVGGVGKTPIVRELLLTLTKRGRRAHGLARGYGGKLKGPVRVEPSRHTVAEVGDEPLMLAQDFPMWVSRDRVLGARKAAASGAEVVVMDDGHQNPDLRKTLSLVVVDGETREDEWPFGDGRVFPAGPMREPLNVSLGRTDAVIVLLPADLPEADPRLLALFGDTPVLIARLEPAAPPPKGRQVGFAGIGKPWKVERALKAAGCHLVDFAPYPDHGQYDEATLNFLWERAQTYSAGLVTTEKDWVRLPQAWRDRVTPWPVRARFEDEGALGALLESVGL.

58–65 (TVGGVGKT) is an ATP binding site.

The protein belongs to the LpxK family.

It catalyses the reaction a lipid A disaccharide + ATP = a lipid IVA + ADP + H(+). The protein operates within glycolipid biosynthesis; lipid IV(A) biosynthesis; lipid IV(A) from (3R)-3-hydroxytetradecanoyl-[acyl-carrier-protein] and UDP-N-acetyl-alpha-D-glucosamine: step 6/6. Transfers the gamma-phosphate of ATP to the 4'-position of a tetraacyldisaccharide 1-phosphate intermediate (termed DS-1-P) to form tetraacyldisaccharide 1,4'-bis-phosphate (lipid IVA). In Caulobacter sp. (strain K31), this protein is Tetraacyldisaccharide 4'-kinase.